A 186-amino-acid chain; its full sequence is Membrane protein Rv1476 (186 aa).

Residues 138–158 (FPWSALTIVLLIGVLAAAVGA) traverse the membrane as a helical segment. The interval 166–186 (RRSATSTDAAPGAGDDLNQGV) is disordered.

It localises to the membrane. In terms of biological role, may affect the expression of genes linked to host macrophage apoptosis and immune response, thereby promoting the survival of M.tuberculosis in host macrophages. Overexpression of the gene increases susceptibility of the bacteria to various stresses, but promotes intracellular survival in host macrophages. It has no impact on the growth rate in vitro. Overexpression causes changes in the transcriptome of THP-1 cells, including expression of genes involved in cell proliferation, fatty acid degradation, cytokine-cytokine receptor interaction and immune response pathways. The chain is Membrane protein Rv1476 from Mycobacterium tuberculosis (strain ATCC 25618 / H37Rv).